Consider the following 365-residue polypeptide: MGAAGSKLEKALGDQFPEGERYFGFENFGNTCYCNSVLQALYFCAPFREQLLEHYANNKADAEENLLTCLADLFSQISSQKKKTGVIAPKRFVQRLKKQNELFRSYMHQDAHEFLNYLLNELVEILEKETQATKADNETSSSPEKIANVLKAPLANGVHKEPIVTWVHKIFQGILTNETRCLRCETVTARDETFLDLSLDIEQNSSITSCLKNFSSTETLHAEDKFFCDKCCSLQEAQKRMKIKKPPHILVIHLKRFKYMEQLGRYKKLSYRVVFPLELKLSNTVDEYVDIEYSLFAVVVHVGSGPNHGHYVSLVKSHNHWLFFDDESVEIIEESAVQTFFGSSQEYSSNTDHGYILLYESLGTR.

Glycine 2 carries N-myristoyl glycine lipidation. In terms of domain architecture, USP spans phenylalanine 23 to leucine 362. Cysteine 32 functions as the Nucleophile in the catalytic mechanism. The Bipartite nuclear localization signal signature appears at lysine 81–lysine 98. Histidine 310 serves as the catalytic Proton acceptor.

This sequence belongs to the peptidase C19 family. As to expression, constitutively and ubiquitously expressed.

The protein resides in the nucleus. It catalyses the reaction Thiol-dependent hydrolysis of ester, thioester, amide, peptide and isopeptide bonds formed by the C-terminal Gly of ubiquitin (a 76-residue protein attached to proteins as an intracellular targeting signal).. Functionally, recognizes and hydrolyzes the peptide bond at the C-terminal Gly of ubiquitin. Involved in the processing of poly-ubiquitin precursors as well as that of ubiquitinated proteins. Required for the correct development of pollen. This chain is Ubiquitin carboxyl-terminal hydrolase 4 (UBP4), found in Arabidopsis thaliana (Mouse-ear cress).